The sequence spans 281 residues: Pantothenate synthetase (281 aa).

30 to 37 (MGALHRGH) serves as a coordination point for ATP. Residue histidine 37 is the Proton donor of the active site. (R)-pantoate is bound at residue glutamine 61. Residue glutamine 61 participates in beta-alanine binding. 147–150 (GEKD) lines the ATP pocket. Glutamine 153 lines the (R)-pantoate pocket. Residues isoleucine 176 and 184 to 187 (LSSR) each bind ATP.

This sequence belongs to the pantothenate synthetase family. As to quaternary structure, homodimer.

It localises to the cytoplasm. The catalysed reaction is (R)-pantoate + beta-alanine + ATP = (R)-pantothenate + AMP + diphosphate + H(+). It functions in the pathway cofactor biosynthesis; (R)-pantothenate biosynthesis; (R)-pantothenate from (R)-pantoate and beta-alanine: step 1/1. Its function is as follows. Catalyzes the condensation of pantoate with beta-alanine in an ATP-dependent reaction via a pantoyl-adenylate intermediate. This chain is Pantothenate synthetase, found in Porphyromonas gingivalis (strain ATCC BAA-308 / W83).